Here is a 209-residue protein sequence, read N- to C-terminus: UPF0174 protein HP_1587 (209 aa).

It belongs to the UPF0174 family.

The polypeptide is UPF0174 protein HP_1587 (Helicobacter pylori (strain ATCC 700392 / 26695) (Campylobacter pylori)).